The chain runs to 289 residues: Polyketide biosynthesis malonyl CoA-acyl carrier protein transacylase BaeC (289 aa).

Active-site residues include Ser87 and His193.

This sequence belongs to the FabD family.

The protein resides in the cytoplasm. It catalyses the reaction holo-[ACP] + malonyl-CoA = malonyl-[ACP] + CoA. Its pathway is antibiotic biosynthesis; bacillaene biosynthesis. Functionally, involved in some intermediate steps for the synthesis of the antibiotic polyketide bacillaene which is involved in secondary metabolism. It catalyzes the transfer of the malonyl-CoA group to the acyl-carrier-protein AcpK (Mal-AcpK). The protein is Polyketide biosynthesis malonyl CoA-acyl carrier protein transacylase BaeC (baeC) of Bacillus velezensis (strain DSM 23117 / BGSC 10A6 / LMG 26770 / FZB42) (Bacillus amyloliquefaciens subsp. plantarum).